The primary structure comprises 215 residues: Uridine kinase (215 aa).

16 to 23 (GASASGKS) lines the ATP pocket.

The protein belongs to the uridine kinase family.

The protein resides in the cytoplasm. The enzyme catalyses uridine + ATP = UMP + ADP + H(+). It catalyses the reaction cytidine + ATP = CMP + ADP + H(+). Its pathway is pyrimidine metabolism; CTP biosynthesis via salvage pathway; CTP from cytidine: step 1/3. It participates in pyrimidine metabolism; UMP biosynthesis via salvage pathway; UMP from uridine: step 1/1. This Aliivibrio salmonicida (strain LFI1238) (Vibrio salmonicida (strain LFI1238)) protein is Uridine kinase.